The sequence spans 552 residues: 5'-AMP-activated protein kinase catalytic subunit alpha-2 (552 aa).

One can recognise a Protein kinase domain in the interval 16 to 268; sequence YVLGDTLGVG…IKDIREHEWF (253 aa). ATP is bound by residues 22-30 and K45; that span reads LGVGTFGKV. Catalysis depends on D139, which acts as the Proton acceptor. T172 is modified (phosphothreonine; by LKB1 and CaMKK2). T258 carries the post-translational modification Phosphothreonine. Positions 291–376 are AIS; the sequence is EAVKEVCEKF…PERMPPLIAD (86 aa). Position 377 is a phosphoserine (S377). Positions 477 to 521 are disordered; it reads VEQRSGSSTPQRSCSAAGLHRPRSSFDSTTAESHSLSGSLTGSLT. Over residues 480–490 the composition is skewed to polar residues; that stretch reads RSGSSTPQRSC. Position 491 is a phosphoserine (S491). Over residues 501–510 the composition is skewed to polar residues; that stretch reads SFDSTTAESH. Over residues 511–521 the composition is skewed to low complexity; it reads SLSGSLTGSLT.

It belongs to the protein kinase superfamily. CAMK Ser/Thr protein kinase family. SNF1 subfamily. In terms of assembly, AMPK is a heterotrimer of an alpha catalytic subunit (PRKAA1 or PRKAA2), a beta (PRKAB1 or PRKAB2) and a gamma non-catalytic subunits (PRKAG1, PRKAG2 or PRKAG3). Interacts with FNIP1 and FNIP2. Associates with internalized insulin receptor/INSR complexes on Golgi/endosomal membranes; PRKAA2/AMPK2 together with ATIC and HACD3/PTPLAD1 is proposed to be part of a signaling network regulating INSR autophosphorylation and endocytosis. Interacts with ARF6. The phosphorylated form at Thr-172 mediated by CamKK2 interacts with ACSS2. Mg(2+) serves as cofactor. Post-translationally, ubiquitinated. Phosphorylated at Thr-172 by STK11/LKB1 in complex with STE20-related adapter-alpha (STRADA) pseudo kinase and CAB39. Also phosphorylated at Thr-172 by CAMKK2; triggered by a rise in intracellular calcium ions, without detectable changes in the AMP/ATP ratio. CAMKK1 can also phosphorylate Thr-172, but at much lower level. Dephosphorylated by protein phosphatase 2A and 2C (PP2A and PP2C). Phosphorylated by ULK1; leading to negatively regulate AMPK activity and suggesting the existence of a regulatory feedback loop between ULK1 and AMPK. Dephosphorylated by PPM1A and PPM1B at Thr-172 (mediated by STK11/LKB1).

The protein localises to the cytoplasm. It is found in the nucleus. It catalyses the reaction L-seryl-[protein] + ATP = O-phospho-L-seryl-[protein] + ADP + H(+). It carries out the reaction L-threonyl-[protein] + ATP = O-phospho-L-threonyl-[protein] + ADP + H(+). The catalysed reaction is L-seryl-[acetyl-CoA carboxylase] + ATP = O-phospho-L-seryl-[acetyl-CoA carboxylase] + ADP + H(+). The enzyme catalyses L-seryl-[3-hydroxy-3-methylglutaryl-coenzyme A reductase] + ATP = O-phospho-L-seryl-[3-hydroxy-3-methylglutaryl-coenzyme A reductase] + ADP + H(+). Activated by phosphorylation on Thr-172. Binding of AMP to non-catalytic gamma subunit (PRKAG1, PRKAG2 or PRKAG3) results in allosteric activation, inducing phosphorylation on Thr-172. AMP-binding to gamma subunit also sustains activity by preventing dephosphorylation of Thr-172. ADP also stimulates Thr-172 phosphorylation, without stimulating already phosphorylated AMPK. ATP promotes dephosphorylation of Thr-172, rendering the enzyme inactive. Under physiological conditions AMPK mainly exists in its inactive form in complex with ATP, which is much more abundant than AMP. AMPK is activated by antihyperglycemic drug metformin, a drug prescribed to patients with type 2 diabetes: in vivo, metformin seems to mainly inhibit liver gluconeogenesis. However, metformin can be used to activate AMPK in muscle and other cells in culture or ex vivo. Selectively inhibited by compound C (6-[4-(2-Piperidin-1-yl-ethoxy)-phenyl)]-3-pyridin-4-yl-pyyrazolo[1,5-a] pyrimidine. Activated by resveratrol, a natural polyphenol present in red wine, and S17834, a synthetic polyphenol. Salicylate/aspirin directly activates kinase activity, primarily by inhibiting Thr-172 dephosphorylation. In terms of biological role, catalytic subunit of AMP-activated protein kinase (AMPK), an energy sensor protein kinase that plays a key role in regulating cellular energy metabolism. In response to reduction of intracellular ATP levels, AMPK activates energy-producing pathways and inhibits energy-consuming processes: inhibits protein, carbohydrate and lipid biosynthesis, as well as cell growth and proliferation. AMPK acts via direct phosphorylation of metabolic enzymes, and by longer-term effects via phosphorylation of transcription regulators. Regulates lipid synthesis by phosphorylating and inactivating lipid metabolic enzymes such as ACACA, ACACB, GYS1, HMGCR and LIPE; regulates fatty acid and cholesterol synthesis by phosphorylating acetyl-CoA carboxylase (ACACA and ACACB) and hormone-sensitive lipase (LIPE) enzymes, respectively. Promotes lipolysis of lipid droplets by mediating phosphorylation of isoform 1 of CHKA (CHKalpha2). Regulates insulin-signaling and glycolysis by phosphorylating IRS1, PFKFB2 and PFKFB3. Involved in insulin receptor/INSR internalization. AMPK stimulates glucose uptake in muscle by increasing the translocation of the glucose transporter SLC2A4/GLUT4 to the plasma membrane, possibly by mediating phosphorylation of TBC1D4/AS160. Regulates transcription and chromatin structure by phosphorylating transcription regulators involved in energy metabolism such as CRTC2/TORC2, FOXO3, histone H2B, HDAC5, MEF2C, MLXIPL/ChREBP, EP300, HNF4A, p53/TP53, SREBF1, SREBF2 and PPARGC1A. Acts as a key regulator of glucose homeostasis in liver by phosphorylating CRTC2/TORC2, leading to CRTC2/TORC2 sequestration in the cytoplasm. In response to stress, phosphorylates 'Ser-36' of histone H2B (H2BS36ph), leading to promote transcription. Acts as a key regulator of cell growth and proliferation by phosphorylating FNIP1, TSC2, RPTOR, WDR24 and ATG1/ULK1: in response to nutrient limitation, negatively regulates the mTORC1 complex by phosphorylating RPTOR component of the mTORC1 complex and by phosphorylating and activating TSC2. Also phosphorylates and inhibits GATOR2 subunit WDR24 in response to nutrient limitation, leading to suppress glucose-mediated mTORC1 activation. In response to energetic stress, phosphorylates FNIP1, inactivating the non-canonical mTORC1 signaling, thereby promoting nuclear translocation of TFEB and TFE3, and inducing transcription of lysosomal or autophagy genes. In response to nutrient limitation, promotes autophagy by phosphorylating and activating ATG1/ULK1. In that process, it also activates WDR45/WIPI4. Phosphorylates CASP6, thereby preventing its autoprocessing and subsequent activation. AMPK also acts as a regulator of circadian rhythm by mediating phosphorylation of CRY1, leading to destabilize it. May regulate the Wnt signaling pathway by phosphorylating CTNNB1, leading to stabilize it. Also acts as a regulator of cellular polarity by remodeling the actin cytoskeleton; probably by indirectly activating myosin. Also phosphorylates CFTR, EEF2K, KLC1, NOS3 and SLC12A1. Plays an important role in the differential regulation of pro-autophagy (composed of PIK3C3, BECN1, PIK3R4 and UVRAG or ATG14) and non-autophagy (composed of PIK3C3, BECN1 and PIK3R4) complexes, in response to glucose starvation. Can inhibit the non-autophagy complex by phosphorylating PIK3C3 and can activate the pro-autophagy complex by phosphorylating BECN1. Upon glucose starvation, promotes ARF6 activation in a kinase-independent manner leading to cell migration. Upon glucose deprivation mediates the phosphorylation of ACSS2 at 'Ser-659', which exposes the nuclear localization signal of ACSS2, required for its interaction with KPNA1 and nuclear translocation. Upon stress, regulates mitochondrial fragmentation through phosphorylation of MTFR1L. In Homo sapiens (Human), this protein is 5'-AMP-activated protein kinase catalytic subunit alpha-2.